Consider the following 92-residue polypeptide: LYR motif-containing protein 4A (92 aa).

This sequence belongs to the complex I LYR family.

The chain is LYR motif-containing protein 4A (lyrm4a) from Salmo salar (Atlantic salmon).